The sequence spans 122 residues: Large ribosomal subunit protein bL12 (122 aa).

A disordered region spans residues Ala96–Thr122. Positions Leu104–Thr122 are enriched in basic and acidic residues.

It belongs to the bacterial ribosomal protein bL12 family. As to quaternary structure, homodimer. Part of the ribosomal stalk of the 50S ribosomal subunit. Forms a multimeric L10(L12)X complex, where L10 forms an elongated spine to which 2 to 4 L12 dimers bind in a sequential fashion. Binds GTP-bound translation factors.

In terms of biological role, forms part of the ribosomal stalk which helps the ribosome interact with GTP-bound translation factors. Is thus essential for accurate translation. The polypeptide is Large ribosomal subunit protein bL12 (Liberibacter asiaticus (Citrus greening disease)).